The chain runs to 157 residues: Putative 4-hydroxy-4-methyl-2-oxoglutarate aldolase (157 aa).

Substrate is bound by residues 78–81 (GDVI) and Arg100. Asp101 contacts a divalent metal cation.

This sequence belongs to the class II aldolase/RraA-like family. As to quaternary structure, homotrimer. It depends on a divalent metal cation as a cofactor.

The enzyme catalyses 4-hydroxy-4-methyl-2-oxoglutarate = 2 pyruvate. It catalyses the reaction oxaloacetate + H(+) = pyruvate + CO2. In terms of biological role, catalyzes the aldol cleavage of 4-hydroxy-4-methyl-2-oxoglutarate (HMG) into 2 molecules of pyruvate. Also contains a secondary oxaloacetate (OAA) decarboxylase activity due to the common pyruvate enolate transition state formed following C-C bond cleavage in the retro-aldol and decarboxylation reactions. The polypeptide is Putative 4-hydroxy-4-methyl-2-oxoglutarate aldolase (Mycobacterium leprae (strain Br4923)).